A 173-amino-acid polypeptide reads, in one-letter code: Crossover junction endodeoxyribonuclease RuvC (173 aa).

Catalysis depends on residues Asp-8, Glu-67, and Asp-139. Residues Asp-8, Glu-67, and Asp-139 each coordinate Mg(2+).

It belongs to the RuvC family. In terms of assembly, homodimer which binds Holliday junction (HJ) DNA. The HJ becomes 2-fold symmetrical on binding to RuvC with unstacked arms; it has a different conformation from HJ DNA in complex with RuvA. In the full resolvosome a probable DNA-RuvA(4)-RuvB(12)-RuvC(2) complex forms which resolves the HJ. It depends on Mg(2+) as a cofactor.

It is found in the cytoplasm. The enzyme catalyses Endonucleolytic cleavage at a junction such as a reciprocal single-stranded crossover between two homologous DNA duplexes (Holliday junction).. Functionally, the RuvA-RuvB-RuvC complex processes Holliday junction (HJ) DNA during genetic recombination and DNA repair. Endonuclease that resolves HJ intermediates. Cleaves cruciform DNA by making single-stranded nicks across the HJ at symmetrical positions within the homologous arms, yielding a 5'-phosphate and a 3'-hydroxyl group; requires a central core of homology in the junction. The consensus cleavage sequence is 5'-(A/T)TT(C/G)-3'. Cleavage occurs on the 3'-side of the TT dinucleotide at the point of strand exchange. HJ branch migration catalyzed by RuvA-RuvB allows RuvC to scan DNA until it finds its consensus sequence, where it cleaves and resolves the cruciform DNA. The polypeptide is Crossover junction endodeoxyribonuclease RuvC (Shewanella loihica (strain ATCC BAA-1088 / PV-4)).